The primary structure comprises 369 residues: Cytokine receptor common subunit gamma (369 aa).

The N-terminal stretch at 1 to 22 (MLKPSLPFTSLLFLQLPLLGVG) is a signal peptide. The Extracellular segment spans residues 23–262 (LNTTILTPNG…ENPFLFALEA (240 aa)). Asn24, Asn71, Asn75, and Asn84 each carry an N-linked (GlcNAc...) asparagine glycan. An intrachain disulfide couples Cys62 to Cys72. A disulfide bridge connects residues Cys102 and Cys115. In terms of domain architecture, Fibronectin type-III spans 156–253 (APENLTLHKL…IHWGSNTSKE (98 aa)). N-linked (GlcNAc...) asparagine glycosylation is present at Asn159. The cysteines at positions 182 and 231 are disulfide-linked. The short motif at 237 to 241 (WSEWS) is the WSXWS motif element. N-linked (GlcNAc...) asparagine glycosylation occurs at Asn249. Residues 263–283 (VVISVGSMGLIISLLCVYFWL) form a helical membrane-spanning segment. The Cytoplasmic portion of the chain corresponds to 284–369 (ERTMPRIPTL…PPCYTLKPET (86 aa)). Residues 286–294 (TMPRIPTLK) carry the Box 1 motif motif. The residue at position 292 (Thr292) is a Phosphothreonine.

The protein belongs to the type I cytokine receptor family. Type 5 subfamily. The gamma subunit is common to the IL2, IL4, IL7, IL15, IL21 and probably also the IL13 receptors. Interacts with SHB upon interleukin stimulation. Interacts with IL9. As to quaternary structure, (Microbial infection) Interacts with HTLV-1 accessory protein p12I.

It is found in the cell membrane. Its subcellular location is the cell surface. In terms of biological role, common subunit for the receptors for a variety of interleukins. Probably in association with IL15RA, involved in the stimulation of neutrophil phagocytosis by IL15. The chain is Cytokine receptor common subunit gamma (IL2RG) from Homo sapiens (Human).